We begin with the raw amino-acid sequence, 375 residues long: 23S rRNA (uracil(747)-C(5))-methyltransferase RlmC (375 aa).

The [4Fe-4S] cluster site is built by cysteine 3, cysteine 11, cysteine 14, and cysteine 87. 4 residues coordinate S-adenosyl-L-methionine: glutamine 212, phenylalanine 241, glutamate 262, and asparagine 307. Cysteine 334 serves as the catalytic Nucleophile.

This sequence belongs to the class I-like SAM-binding methyltransferase superfamily. RNA M5U methyltransferase family. RlmC subfamily.

It carries out the reaction uridine(747) in 23S rRNA + S-adenosyl-L-methionine = 5-methyluridine(747) in 23S rRNA + S-adenosyl-L-homocysteine + H(+). Functionally, catalyzes the formation of 5-methyl-uridine at position 747 (m5U747) in 23S rRNA. This Escherichia coli (strain K12 / MC4100 / BW2952) protein is 23S rRNA (uracil(747)-C(5))-methyltransferase RlmC.